The following is a 743-amino-acid chain: Threonine--tRNA ligase (743 aa).

A compositionally biased stretch (low complexity) spans 1–15 (MSADSPSSPASSQAA). A disordered region spans residues 1–30 (MSADSPSSPASSQAAEVQVRLPDGSLKTQP). The TGS domain maps to 13–76 (QAAEVQVRLP…GEIADDENVV (64 aa)). The catalytic stretch occupies residues 264 to 619 (DHRVLGKQHG…LIEHFAGAFP (356 aa)). The segment at 354 to 404 (AWSTRLDKDDLSKDDEDKLIAAAEVFGVKLPDYKPSASNDAKKDVLHRWQL) is insert. 3 residues coordinate Zn(2+): cysteine 416, histidine 467, and histidine 596.

It belongs to the class-II aminoacyl-tRNA synthetase family. In terms of assembly, homodimer. It depends on Zn(2+) as a cofactor.

The protein resides in the cytoplasm. It catalyses the reaction tRNA(Thr) + L-threonine + ATP = L-threonyl-tRNA(Thr) + AMP + diphosphate + H(+). Catalyzes the attachment of threonine to tRNA(Thr) in a two-step reaction: L-threonine is first activated by ATP to form Thr-AMP and then transferred to the acceptor end of tRNA(Thr). Also edits incorrectly charged L-seryl-tRNA(Thr). The polypeptide is Threonine--tRNA ligase (Rhodopirellula baltica (strain DSM 10527 / NCIMB 13988 / SH1)).